The following is a 156-amino-acid chain: ATP synthase subunit b (156 aa).

The chain crosses the membrane as a helical span at residues 7 to 29 (LLGQAISFAMFVWFCMKYVWPPI).

It belongs to the ATPase B chain family. In terms of assembly, F-type ATPases have 2 components, F(1) - the catalytic core - and F(0) - the membrane proton channel. F(1) has five subunits: alpha(3), beta(3), gamma(1), delta(1), epsilon(1). F(0) has three main subunits: a(1), b(2) and c(10-14). The alpha and beta chains form an alternating ring which encloses part of the gamma chain. F(1) is attached to F(0) by a central stalk formed by the gamma and epsilon chains, while a peripheral stalk is formed by the delta and b chains.

It localises to the cell inner membrane. Its function is as follows. F(1)F(0) ATP synthase produces ATP from ADP in the presence of a proton or sodium gradient. F-type ATPases consist of two structural domains, F(1) containing the extramembraneous catalytic core and F(0) containing the membrane proton channel, linked together by a central stalk and a peripheral stalk. During catalysis, ATP synthesis in the catalytic domain of F(1) is coupled via a rotary mechanism of the central stalk subunits to proton translocation. Component of the F(0) channel, it forms part of the peripheral stalk, linking F(1) to F(0). The protein is ATP synthase subunit b of Vibrio vulnificus (strain CMCP6).